We begin with the raw amino-acid sequence, 615 residues long: Chaperone protein HscA homolog (615 aa).

It belongs to the heat shock protein 70 family.

In terms of biological role, chaperone involved in the maturation of iron-sulfur cluster-containing proteins. Has a low intrinsic ATPase activity which is markedly stimulated by HscB. This Aeromonas hydrophila subsp. hydrophila (strain ATCC 7966 / DSM 30187 / BCRC 13018 / CCUG 14551 / JCM 1027 / KCTC 2358 / NCIMB 9240 / NCTC 8049) protein is Chaperone protein HscA homolog.